The chain runs to 520 residues: Protein nucleotidyltransferase YdiU (520 aa).

Residues G108, G110, R111, K130, D142, G143, R193, and R200 each contribute to the ATP site. The Proton acceptor role is filled by D269. Mg(2+)-binding residues include N270 and D279. D279 lines the ATP pocket.

It belongs to the SELO family. It depends on Mg(2+) as a cofactor. Requires Mn(2+) as cofactor.

It catalyses the reaction L-seryl-[protein] + ATP = 3-O-(5'-adenylyl)-L-seryl-[protein] + diphosphate. The enzyme catalyses L-threonyl-[protein] + ATP = 3-O-(5'-adenylyl)-L-threonyl-[protein] + diphosphate. It carries out the reaction L-tyrosyl-[protein] + ATP = O-(5'-adenylyl)-L-tyrosyl-[protein] + diphosphate. The catalysed reaction is L-histidyl-[protein] + UTP = N(tele)-(5'-uridylyl)-L-histidyl-[protein] + diphosphate. It catalyses the reaction L-seryl-[protein] + UTP = O-(5'-uridylyl)-L-seryl-[protein] + diphosphate. The enzyme catalyses L-tyrosyl-[protein] + UTP = O-(5'-uridylyl)-L-tyrosyl-[protein] + diphosphate. Functionally, nucleotidyltransferase involved in the post-translational modification of proteins. It can catalyze the addition of adenosine monophosphate (AMP) or uridine monophosphate (UMP) to a protein, resulting in modifications known as AMPylation and UMPylation. This chain is Protein nucleotidyltransferase YdiU, found in Cupriavidus pinatubonensis (strain JMP 134 / LMG 1197) (Cupriavidus necator (strain JMP 134)).